The following is a 263-amino-acid chain: Retinoic acid early transcript 1E (263 aa).

An N-terminal signal peptide occupies residues 1–30 (MRRISLTSSPVRLLLFLLLLLIALEIMVGG). Positions 31 to 116 (HSLCFNFTIK…DIKPQIKTSD (86 aa)) are MHC class I alpha-1 like; down-regulates the cell surface expression of KLRK1. The Extracellular segment spans residues 31-225 (HSLCFNFTIK…IHWSSSSLPD (195 aa)). N-linked (GlcNAc...) asparagine glycosylation is found at asparagine 36, asparagine 154, and asparagine 212. An MHC class I alpha-2 like; down-regulates the cell surface expression of KLRK1 region spans residues 117–207 (PSTLQVEMFC…GHWEAMPEPT (91 aa)). The cysteines at positions 126 and 189 are disulfide-linked. Residues 226–248 (RWIILGAFILLVLMGIVLICVWW) form a helical membrane-spanning segment. At 249-263 (QNGEWQAGLWPLRTS) the chain is on the cytoplasmic side.

Belongs to the MHC class I family. As to quaternary structure, binds to KLRK1/NKG2D. (Microbial infection) Contrary to other family members, does not interact with CMV glycoprotein UL16. In terms of tissue distribution, predominantly expressed in the skin, but also expressed in testis and trachea. Up-regulated in tumor cells of different origins. Expression progressively decreased after treatment of tumor cells with retinoic acid.

Its subcellular location is the membrane. It is found in the secreted. Binds and activates the KLRK1/NKG2D receptor, mediating natural killer cell cytotoxicity. The sequence is that of Retinoic acid early transcript 1E from Homo sapiens (Human).